A 296-amino-acid chain; its full sequence is Maltose/maltodextrin transport system permease protein MalG (296 aa).

The Cytoplasmic portion of the chain corresponds to 1–12 (MAMVQPKSQKWR). Residues 13–35 (LLATHLLMFTFIAMILFPLLMVI) form a helical membrane-spanning segment. The Periplasmic segment spans residues 36 to 88 (TISLRPGNFATGSLIPENISWEHWKLALGYSVVSPDGRVTPPPFPVMLWLWNS). The ABC transmembrane type-1 domain maps to 85–281 (LWNSVKVAFI…LPITIVFLVA (197 aa)). Residues 89 to 111 (VKVAFITAVGIVTLSTTCAYAFA) form a helical membrane-spanning segment. Residues 112 to 123 (RMHFRGKSTLLK) are Cytoplasmic-facing. The chain crosses the membrane as a helical span at residues 124–143 (GMLIFQMFPAVLSLVALYAL). The Periplasmic segment spans residues 144 to 152 (FDRLGEYVP). The helical transmembrane segment at 153 to 175 (FIGLNTHGGVIFAYLGGIALHVW) threads the bilayer. The Cytoplasmic segment spans residues 176-205 (TIKGYFETIDGSLEEAAALDGATPWQAFRM). Residues 206-228 (VLLPLSVPILAVVFILSFIGVIT) traverse the membrane as a helical segment. At 229–257 (EVPVASLLLRDVNNYTLAVGMQQYLNPQN) the chain is on the periplasmic side. Residues 258 to 280 (YLWGDFAAAAVLSALPITIVFLV) form a helical membrane-spanning segment. The Cytoplasmic segment spans residues 281 to 296 (AQRWLVSGLTAGGVKG).

Belongs to the binding-protein-dependent transport system permease family. MalFG subfamily. As to quaternary structure, the complex is composed of two ATP-binding proteins (MalK), two transmembrane proteins (MalG and MalF) and a solute-binding protein (MalE).

Its subcellular location is the cell inner membrane. In terms of biological role, part of the ABC transporter complex MalEFGK involved in maltose/maltodextrin import. Probably responsible for the translocation of the substrate across the membrane. The sequence is that of Maltose/maltodextrin transport system permease protein MalG (malG) from Photorhabdus laumondii subsp. laumondii (strain DSM 15139 / CIP 105565 / TT01) (Photorhabdus luminescens subsp. laumondii).